The primary structure comprises 174 residues: Nucleoside diphosphate kinase (174 aa).

ATP contacts are provided by Lys-14, Phe-62, Arg-90, Thr-96, and Arg-107. Residue His-123 is the Pros-phosphohistidine intermediate of the active site.

This sequence belongs to the NDK family. It depends on Mg(2+) as a cofactor.

It is found in the cytoplasm. It carries out the reaction a 2'-deoxyribonucleoside 5'-diphosphate + ATP = a 2'-deoxyribonucleoside 5'-triphosphate + ADP. The catalysed reaction is a ribonucleoside 5'-diphosphate + ATP = a ribonucleoside 5'-triphosphate + ADP. Functionally, major role in the synthesis of nucleoside triphosphates other than ATP. The ATP gamma phosphate is transferred to the NDP beta phosphate via a ping-pong mechanism, using a phosphorylated active-site intermediate. This chain is Nucleoside diphosphate kinase, found in Thermococcus kodakarensis (strain ATCC BAA-918 / JCM 12380 / KOD1) (Pyrococcus kodakaraensis (strain KOD1)).